The following is a 351-amino-acid chain: Minor outer capsid protein P9 (351 aa).

The tract at residues 246 to 308 is disordered; the sequence is GVPAALPQPD…KAVPSGNVSA (63 aa). A compositionally biased stretch (basic and acidic residues) spans 285–297; the sequence is MIRKKVETSKDAP.

The protein belongs to the phytoreovirus minor outer capsid protein P9 family.

Its subcellular location is the virion. The protein resides in the host cytoplasm. Its function is as follows. Minor outer capsid protein. This chain is Minor outer capsid protein P9, found in Rice dwarf virus (isolate O) (RDV).